We begin with the raw amino-acid sequence, 146 residues long: MKLHELRAAEGANKASKRVGRGTGSGLGKTSGRGQNGQNSRSGGGVRPGFEGGQMPLYRRLPKRGFKNIFAKEYAAINLDRLNCFEDGTVVTPELLVEKRVVKKVKDGVKILGNGNIEKKLTVKAAKFSKSAIEKIEAAGGKVEVI.

The segment at 1–56 (MKLHELRAAEGANKASKRVGRGTGSGLGKTSGRGQNGQNSRSGGGVRPGFEGGQMP) is disordered. Gly residues-rich tracts occupy residues 21–35 (RGTG…GRGQ) and 42–52 (SGGGVRPGFEG).

This sequence belongs to the universal ribosomal protein uL15 family. Part of the 50S ribosomal subunit.

Its function is as follows. Binds to the 23S rRNA. This Clostridium botulinum (strain Okra / Type B1) protein is Large ribosomal subunit protein uL15.